Reading from the N-terminus, the 289-residue chain is Rhodopsin (289 aa).

The Extracellular segment spans residues Tyr-1 to Ala-7. The helical transmembrane segment at Tyr-8 to Val-32 threads the bilayer. Residues Thr-33 to Asn-44 are Cytoplasmic-facing. The chain crosses the membrane as a helical span at residues Tyr-45–Tyr-67. Residues Thr-68–Cys-81 lie on the Extracellular side of the membrane. Residues Cys-81 and Cys-158 are joined by a disulfide bond. Residues Asn-82–Ile-104 traverse the membrane as a helical segment. Residues Glu-105–Trp-107 carry the 'Ionic lock' involved in activated form stabilization motif. Residues Glu-105–Asn-123 are Cytoplasmic-facing. A helical membrane pass occupies residues Ala-124–Val-144. Residues Gly-145–Ser-173 lie on the Extracellular side of the membrane. Residue Asn-171 is glycosylated (N-linked (GlcNAc...) asparagine). Residues Phe-174–Gly-195 form a helical membrane-spanning segment. Residues Arg-196–Arg-223 lie on the Cytoplasmic side of the membrane. The helical transmembrane segment at Met-224–Trp-245 threads the bilayer. The Extracellular segment spans residues Ile-246–Ile-257. Residues Phe-258–Cys-279 traverse the membrane as a helical segment. Residue Lys-267 is modified to N6-(retinylidene)lysine. Residues Met-280–Ile-289 lie on the Cytoplasmic side of the membrane.

Belongs to the G-protein coupled receptor 1 family. Opsin subfamily. Phosphorylated on some or all of the serine and threonine residues present in the C-terminal region. In terms of processing, contains one covalently linked retinal chromophore.

The protein localises to the membrane. The protein resides in the cell projection. Its subcellular location is the cilium. It is found in the photoreceptor outer segment. Functionally, photoreceptor required for image-forming vision at low light intensity. While most salt water fish species use retinal as chromophore, most freshwater fish use 3-dehydroretinal, or a mixture of retinal and 3-dehydroretinal. Light-induced isomerization of 11-cis to all-trans retinal triggers a conformational change that activates signaling via G-proteins. Subsequent receptor phosphorylation mediates displacement of the bound G-protein alpha subunit by arrestin and terminates signaling. This Batrachocottus nikolskii (Fat sculpin) protein is Rhodopsin (rho).